The chain runs to 146 residues: 3-dehydroquinate dehydratase (146 aa).

Tyrosine 23 (proton acceptor) is an active-site residue. Substrate contacts are provided by asparagine 75, histidine 81, and aspartate 88. Histidine 101 functions as the Proton donor in the catalytic mechanism. Substrate is bound by residues 102–103 (LS) and arginine 112.

The protein belongs to the type-II 3-dehydroquinase family. As to quaternary structure, homododecamer.

It carries out the reaction 3-dehydroquinate = 3-dehydroshikimate + H2O. The protein operates within metabolic intermediate biosynthesis; chorismate biosynthesis; chorismate from D-erythrose 4-phosphate and phosphoenolpyruvate: step 3/7. In terms of biological role, catalyzes a trans-dehydration via an enolate intermediate. In Saccharophagus degradans (strain 2-40 / ATCC 43961 / DSM 17024), this protein is 3-dehydroquinate dehydratase.